Here is a 303-residue protein sequence, read N- to C-terminus: Hydroxyethylthiazole kinase (303 aa).

The span at 1–15 (MTTASTTPNSDTSNL) shows a compositional bias: polar residues. The disordered stretch occupies residues 1–23 (MTTASTTPNSDTSNLHEVAPDDP). Residue methionine 67 participates in substrate binding. ATP contacts are provided by arginine 142 and serine 206. Residue glycine 233 participates in substrate binding.

The protein belongs to the Thz kinase family. Mg(2+) is required as a cofactor.

It catalyses the reaction 5-(2-hydroxyethyl)-4-methylthiazole + ATP = 4-methyl-5-(2-phosphooxyethyl)-thiazole + ADP + H(+). It functions in the pathway cofactor biosynthesis; thiamine diphosphate biosynthesis; 4-methyl-5-(2-phosphoethyl)-thiazole from 5-(2-hydroxyethyl)-4-methylthiazole: step 1/1. Functionally, catalyzes the phosphorylation of the hydroxyl group of 4-methyl-5-beta-hydroxyethylthiazole (THZ). The polypeptide is Hydroxyethylthiazole kinase (Bifidobacterium animalis subsp. lactis (strain AD011)).